The sequence spans 429 residues: Serine--tRNA ligase (429 aa).

Residue 228-230 participates in L-serine binding; it reads TSE. An ATP-binding site is contributed by 259–261; that stretch reads RAE. E282 lines the L-serine pocket. 346–349 is a binding site for ATP; it reads EISS. Position 384 (S384) interacts with L-serine.

The protein belongs to the class-II aminoacyl-tRNA synthetase family. Type-1 seryl-tRNA synthetase subfamily. As to quaternary structure, homodimer. The tRNA molecule binds across the dimer.

The protein resides in the cytoplasm. The catalysed reaction is tRNA(Ser) + L-serine + ATP = L-seryl-tRNA(Ser) + AMP + diphosphate + H(+). It catalyses the reaction tRNA(Sec) + L-serine + ATP = L-seryl-tRNA(Sec) + AMP + diphosphate + H(+). Its pathway is aminoacyl-tRNA biosynthesis; selenocysteinyl-tRNA(Sec) biosynthesis; L-seryl-tRNA(Sec) from L-serine and tRNA(Sec): step 1/1. Its function is as follows. Catalyzes the attachment of serine to tRNA(Ser). Is also able to aminoacylate tRNA(Sec) with serine, to form the misacylated tRNA L-seryl-tRNA(Sec), which will be further converted into selenocysteinyl-tRNA(Sec). The chain is Serine--tRNA ligase from Anaplasma marginale (strain St. Maries).